A 514-amino-acid chain; its full sequence is 2-isopropylmalate synthase (514 aa).

The 263-residue stretch at 8–270 folds into the Pyruvate carboxyltransferase domain; it reads IRIFDTTLRD…DCGVVTEQLF (263 aa). Residues Asp-17, His-205, His-207, and Asn-241 each coordinate Mn(2+). The tract at residues 394–514 is regulatory domain; sequence RLVNLSVQCS…KEEEQEKEGI (121 aa).

It belongs to the alpha-IPM synthase/homocitrate synthase family. LeuA type 1 subfamily. As to quaternary structure, homodimer. It depends on Mn(2+) as a cofactor.

The protein localises to the cytoplasm. The catalysed reaction is 3-methyl-2-oxobutanoate + acetyl-CoA + H2O = (2S)-2-isopropylmalate + CoA + H(+). It participates in amino-acid biosynthesis; L-leucine biosynthesis; L-leucine from 3-methyl-2-oxobutanoate: step 1/4. Functionally, catalyzes the condensation of the acetyl group of acetyl-CoA with 3-methyl-2-oxobutanoate (2-ketoisovalerate) to form 3-carboxy-3-hydroxy-4-methylpentanoate (2-isopropylmalate). The polypeptide is 2-isopropylmalate synthase (Nitratidesulfovibrio vulgaris (strain DSM 19637 / Miyazaki F) (Desulfovibrio vulgaris)).